The following is a 151-amino-acid chain: SsrA-binding protein (151 aa).

It belongs to the SmpB family.

The protein resides in the cytoplasm. Functionally, required for rescue of stalled ribosomes mediated by trans-translation. Binds to transfer-messenger RNA (tmRNA), required for stable association of tmRNA with ribosomes. tmRNA and SmpB together mimic tRNA shape, replacing the anticodon stem-loop with SmpB. tmRNA is encoded by the ssrA gene; the 2 termini fold to resemble tRNA(Ala) and it encodes a 'tag peptide', a short internal open reading frame. During trans-translation Ala-aminoacylated tmRNA acts like a tRNA, entering the A-site of stalled ribosomes, displacing the stalled mRNA. The ribosome then switches to translate the ORF on the tmRNA; the nascent peptide is terminated with the 'tag peptide' encoded by the tmRNA and targeted for degradation. The ribosome is freed to recommence translation, which seems to be the essential function of trans-translation. In Geotalea uraniireducens (strain Rf4) (Geobacter uraniireducens), this protein is SsrA-binding protein.